A 118-amino-acid polypeptide reads, in one-letter code: Large ribosomal subunit protein bL20 (118 aa).

The protein belongs to the bacterial ribosomal protein bL20 family.

In terms of biological role, binds directly to 23S ribosomal RNA and is necessary for the in vitro assembly process of the 50S ribosomal subunit. It is not involved in the protein synthesizing functions of that subunit. This is Large ribosomal subunit protein bL20 from Sodalis glossinidius (strain morsitans).